Consider the following 471-residue polypeptide: Ubiquitin-conjugating enzyme E2 variant 3 (471 aa).

Residues Asp-2–Ser-145 enclose the UEV domain. Gly-183–Ser-211 is an NAD(+) binding site.

In the N-terminal section; belongs to the ubiquitin-conjugating enzyme family. UEV subfamily. It in the C-terminal section; belongs to the LDH/MDH superfamily. As to quaternary structure, homodimer.

Possible negative regulator of polyubiquitination. In Danio rerio (Zebrafish), this protein is Ubiquitin-conjugating enzyme E2 variant 3 (uevld).